The chain runs to 362 residues: Homeobox protein extradenticle (362 aa).

Positions 34–225 constitute a PBC domain; that stretch reads PRKQDIGEIL…VMILRSRFLD (192 aa). A PBC-A region spans residues 41 to 120; sequence EILQQIMNIT…EGVAGPEKGG (80 aa). Residues 123–225 are PBC-B; it reads DFLSQSDLTG…VMILRSRFLD (103 aa). A DNA-binding region (homeobox; TALE-type) is located at residues 226–288; sequence ARRKRRNFSK…NKRIRYKKNI (63 aa). Residues 305–362 are disordered; sequence GASPYSMGGPPSGAATPMMSPAPAQDSMGYSLGSGGYDQQQPYDGSMGYDQLHQDLSP.

It belongs to the TALE/PBX homeobox family.

It localises to the nucleus. Its function is as follows. Transcription factor which acts with the selector homeodomain proteins altering the regulation of downstream target genes such as wingless (wg), teashirt (tsh) and decapentaplegic (dpp), thus affecting segmental identity. The protein is Homeobox protein extradenticle of Anopheles gambiae (African malaria mosquito).